A 321-amino-acid chain; its full sequence is Glycerol-3-phosphate phosphatase (321 aa).

The active-site Nucleophile is Asp-34. The Mg(2+) site is built by Asp-34, Asp-36, and Asp-260. Asp-36 acts as the Proton donor in catalysis.

This sequence belongs to the HAD-like hydrolase superfamily. CbbY/CbbZ/Gph/YieH family. As to quaternary structure, homodimer. It depends on Mg(2+) as a cofactor. Ubiquitously expressed with higher expression in testis, heart, skeletal muscle and islet tissue (at protein level).

The catalysed reaction is O-phospho-L-tyrosyl-[protein] + H2O = L-tyrosyl-[protein] + phosphate. The enzyme catalyses sn-glycerol 1-phosphate + H2O = glycerol + phosphate. It carries out the reaction sn-glycerol 3-phosphate + H2O = glycerol + phosphate. With respect to regulation, inhibited by orthovanadate, beryllium trifluoride, Ca(2+) and EDTA. Functionally, glycerol-3-phosphate phosphatase hydrolyzing glycerol-3-phosphate into glycerol. Thereby, regulates the cellular levels of glycerol-3-phosphate a metabolic intermediate of glucose, lipid and energy metabolism. Was also shown to have a 2-phosphoglycolate phosphatase activity and a tyrosine-protein phosphatase activity. However, their physiological relevance is unclear. In vitro, also has a phosphatase activity toward ADP, ATP, GDP and GTP. This is Glycerol-3-phosphate phosphatase from Mus musculus (Mouse).